Consider the following 886-residue polypeptide: DNA gyrase subunit A (886 aa).

Residues 35 to 501 (LPDVRDGLKP…GFEDLEDEDL (467 aa)) form the Topo IIA-type catalytic domain. The active-site O-(5'-phospho-DNA)-tyrosine intermediate is Y123. The GyrA-box signature appears at 528-534 (QNRGGRG). Residues 810 to 860 (VKEDADEENEDEQSTVSEDGTEQQREAVVNDETPGNAIHTEVIDSEVNDED) form a disordered region. Positions 813-822 (DADEENEDEQ) are enriched in acidic residues.

The protein belongs to the type II topoisomerase GyrA/ParC subunit family. As to quaternary structure, heterotetramer, composed of two GyrA and two GyrB chains. In the heterotetramer, GyrA contains the active site tyrosine that forms a transient covalent intermediate with DNA, while GyrB binds cofactors and catalyzes ATP hydrolysis.

The protein resides in the cytoplasm. It carries out the reaction ATP-dependent breakage, passage and rejoining of double-stranded DNA.. A type II topoisomerase that negatively supercoils closed circular double-stranded (ds) DNA in an ATP-dependent manner to modulate DNA topology and maintain chromosomes in an underwound state. Negative supercoiling favors strand separation, and DNA replication, transcription, recombination and repair, all of which involve strand separation. Also able to catalyze the interconversion of other topological isomers of dsDNA rings, including catenanes and knotted rings. Type II topoisomerases break and join 2 DNA strands simultaneously in an ATP-dependent manner. The sequence is that of DNA gyrase subunit A from Staphylococcus aureus (strain MRSA252).